We begin with the raw amino-acid sequence, 440 residues long: MQATATTLDHEQEYTPINSRNKVLVASLIGTAIEFFDFYIYATAAVIVFPHIFFPQGDPTAATLQSLATFAIAFVARPIGSAVFGHFGDRVGRKATLVASLLTMGISTVVIGLLPGYATIGIFAPLLLALARFGQGLGLGGEWGGAALLATENAPPRKRALYGSFPQLGAPIGFFFANGTFLLLSWLLTDEQFMSWGWRVPFIFSAVLVIIGLYVRVSLHESPVFEKVAKAKKQVKIPLGTLLTKHVRVTVLGTFIMLATYTLFYIMTVYSMTFSTAAAPVGLGLPRNEVLWMLMMAVIGFGVMVPVAGLLADAFGRRKSMVIITTLIILFALFAFNPLLGSGNPILVFAFLLLGLSLMGLTFGPMGALLPELFPTEVRYTGASFSYNVASILGASVAPYIAAWLQTNYGLGAVGLYLAAMAGLTLIALLLTHETRHQSL.

The Cytoplasmic segment spans residues 1 to 34 (MQATATTLDHEQEYTPINSRNKVLVASLIGTAIE). A helical transmembrane segment spans residues 35 to 55 (FFDFYIYATAAVIVFPHIFFP). The Periplasmic segment spans residues 56–66 (QGDPTAATLQS). Residues 67–87 (LATFAIAFVARPIGSAVFGHF) form a helical membrane-spanning segment. Residues 88–108 (GDRVGRKATLVASLLTMGIST) lie on the Cytoplasmic side of the membrane. Helical transmembrane passes span 109–129 (VVIGLLPGYATIGIFAPLLLA) and 130–150 (LARFGQGLGLGGEWGGAALLA). At 151 to 167 (TENAPPRKRALYGSFPQ) the chain is on the cytoplasmic side. The helical transmembrane segment at 168–188 (LGAPIGFFFANGTFLLLSWLL) threads the bilayer. Residues 189-192 (TDEQ) lie on the Periplasmic side of the membrane. A helical transmembrane segment spans residues 193-213 (FMSWGWRVPFIFSAVLVIIGL). The Cytoplasmic portion of the chain corresponds to 214–248 (YVRVSLHESPVFEKVAKAKKQVKIPLGTLLTKHVR). A helical transmembrane segment spans residues 249–269 (VTVLGTFIMLATYTLFYIMTV). Residues 270–289 (YSMTFSTAAAPVGLGLPRNE) are Periplasmic-facing. A helical transmembrane segment spans residues 290–310 (VLWMLMMAVIGFGVMVPVAGL). At 311–320 (LADAFGRRKS) the chain is on the cytoplasmic side. Residues 321 to 341 (MVIITTLIILFALFAFNPLLG) traverse the membrane as a helical segment. Residues 342-345 (SGNP) are Periplasmic-facing. A helical transmembrane segment spans residues 346–366 (ILVFAFLLLGLSLMGLTFGPM). Topologically, residues 367–384 (GALLPELFPTEVRYTGAS) are cytoplasmic. The helical transmembrane segment at 385–405 (FSYNVASILGASVAPYIAAWL) threads the bilayer. Residues 406–410 (QTNYG) lie on the Periplasmic side of the membrane. A helical membrane pass occupies residues 411–431 (LGAVGLYLAAMAGLTLIALLL). Topologically, residues 432-440 (THETRHQSL) are cytoplasmic.

This sequence belongs to the major facilitator superfamily. Metabolite:H+ Symporter (MHS) family (TC 2.A.1.6) family.

The protein localises to the cell inner membrane. The chain is Inner membrane metabolite transport protein YhjE (yhjE) from Escherichia coli (strain K12).